Consider the following 742-residue polypeptide: Kanadaptin (742 aa).

A compositionally biased stretch (polar residues) spans 1–16; it reads MADILSQSETLASQDL. Residues 1–112 are disordered; that stretch reads MADILSQSET…PPWGGPATAP (112 aa). Positions 27–43 are enriched in low complexity; the sequence is VSPAARSKAPASSSSNP. Serine 28 is subject to Phosphoserine. Basic and acidic residues predominate over residues 72-82; the sequence is GDFRSLQEEQS. The residue at position 90 (serine 90) is a Phosphoserine. Residues 96 to 106 are compositionally biased toward pro residues; it reads RAPPYQEPPWG. In terms of domain architecture, FHA spans 135 to 195; that stretch reads CLFGRLSGCD…HGTFLNKTRI (61 aa). Residues 254-282 form a disordered region; the sequence is LGEDSDEEEEMDTSERKINAGSQDDEMGC. Residues 256 to 265 show a composition bias toward acidic residues; that stretch reads EDSDEEEEMD. A phosphoserine mark is found at serine 258 and serine 412. Lysine 441 participates in a covalent cross-link: Glycyl lysine isopeptide (Lys-Gly) (interchain with G-Cter in SUMO2). The stretch at 443-476 forms a coiled coil; the sequence is ETFESLVAKLNDAERELSEISERLKASSQVLSES. Residue serine 476 is modified to Phosphoserine. The interval 565–742 is disordered; it reads LKTGTVGKLP…RTHLNDKYGY (178 aa). Positions 591-606 are enriched in acidic residues; it reads PEVEEEEEEEEEEEKE. Basic and acidic residues predominate over residues 607–619; the sequence is KEEHEKKKLEDGS. 2 positions are modified to phosphoserine: serine 655 and serine 658. A compositionally biased stretch (low complexity) spans 699 to 708; sequence PGPGKLPPTL. Positions 732–742 are enriched in basic and acidic residues; it reads GRTHLNDKYGY.

As to expression, ubiquitously expressed.

Its subcellular location is the nucleus. The protein resides in the cytoplasm. This is Kanadaptin (SLC4A1AP) from Homo sapiens (Human).